A 340-amino-acid polypeptide reads, in one-letter code: Glycerol-3-phosphate dehydrogenase [NAD(P)+] (340 aa).

Residues S14, Y15, H35, and K109 each coordinate NADPH. The sn-glycerol 3-phosphate site is built by K109, G138, and T140. A142 lines the NADPH pocket. The sn-glycerol 3-phosphate site is built by K194, D247, S257, R258, and N259. Residue K194 is the Proton acceptor of the active site. R258 provides a ligand contact to NADPH. NADPH-binding residues include V282 and E284.

The protein belongs to the NAD-dependent glycerol-3-phosphate dehydrogenase family.

It is found in the cytoplasm. It carries out the reaction sn-glycerol 3-phosphate + NAD(+) = dihydroxyacetone phosphate + NADH + H(+). It catalyses the reaction sn-glycerol 3-phosphate + NADP(+) = dihydroxyacetone phosphate + NADPH + H(+). Its pathway is membrane lipid metabolism; glycerophospholipid metabolism. Its function is as follows. Catalyzes the reduction of the glycolytic intermediate dihydroxyacetone phosphate (DHAP) to sn-glycerol 3-phosphate (G3P), the key precursor for phospholipid synthesis. The chain is Glycerol-3-phosphate dehydrogenase [NAD(P)+] from Photorhabdus laumondii subsp. laumondii (strain DSM 15139 / CIP 105565 / TT01) (Photorhabdus luminescens subsp. laumondii).